The following is a 472-amino-acid chain: Divalent metal cation transporter MntH (472 aa).

Helical transmembrane passes span 59–79 (LLAF…PGNW), 92–112 (MLLS…ALAA), 136–156 (LALW…EVIG), 167–187 (VPII…LLLM), 196–216 (AFVI…IVLA), 233–253 (VVAD…TVMP), 288–308 (LALM…AAVF), 325–345 (LLAP…ALLA), 377–397 (VLTR…YGEQ), 402–422 (LLLL…IPLL), and 439–459 (WLMV…VKLL).

This sequence belongs to the NRAMP family.

The protein resides in the cell inner membrane. In terms of biological role, h(+)-stimulated, divalent metal cation uptake system. The protein is Divalent metal cation transporter MntH of Xylella fastidiosa (strain 9a5c).